The sequence spans 252 residues: tRNA (guanine-N(1)-)-methyltransferase (252 aa).

Residues glycine 118 and 138–143 each bind S-adenosyl-L-methionine; that span reads IGDYVL.

Belongs to the RNA methyltransferase TrmD family. As to quaternary structure, homodimer.

The protein resides in the cytoplasm. The catalysed reaction is guanosine(37) in tRNA + S-adenosyl-L-methionine = N(1)-methylguanosine(37) in tRNA + S-adenosyl-L-homocysteine + H(+). Specifically methylates guanosine-37 in various tRNAs. The protein is tRNA (guanine-N(1)-)-methyltransferase of Pseudomonas paraeruginosa (strain DSM 24068 / PA7) (Pseudomonas aeruginosa (strain PA7)).